The primary structure comprises 161 residues: Cyclic pyranopterin monophosphate synthase (161 aa).

Substrate-binding positions include 73–75 (LCH) and 110–111 (ME). Residue aspartate 125 is part of the active site.

The protein belongs to the MoaC family. As to quaternary structure, homohexamer; trimer of dimers.

The enzyme catalyses (8S)-3',8-cyclo-7,8-dihydroguanosine 5'-triphosphate = cyclic pyranopterin phosphate + diphosphate. Its pathway is cofactor biosynthesis; molybdopterin biosynthesis. In terms of biological role, catalyzes the conversion of (8S)-3',8-cyclo-7,8-dihydroguanosine 5'-triphosphate to cyclic pyranopterin monophosphate (cPMP). This chain is Cyclic pyranopterin monophosphate synthase, found in Pseudomonas savastanoi pv. phaseolicola (strain 1448A / Race 6) (Pseudomonas syringae pv. phaseolicola (strain 1448A / Race 6)).